The sequence spans 427 residues: Glutamate-1-semialdehyde 2,1-aminomutase (427 aa).

Lys265 bears the N6-(pyridoxal phosphate)lysine mark.

Belongs to the class-III pyridoxal-phosphate-dependent aminotransferase family. HemL subfamily. Homodimer. Pyridoxal 5'-phosphate is required as a cofactor.

The protein localises to the cytoplasm. The catalysed reaction is (S)-4-amino-5-oxopentanoate = 5-aminolevulinate. It participates in porphyrin-containing compound metabolism; protoporphyrin-IX biosynthesis; 5-aminolevulinate from L-glutamyl-tRNA(Glu): step 2/2. This chain is Glutamate-1-semialdehyde 2,1-aminomutase, found in Burkholderia mallei (strain NCTC 10229).